We begin with the raw amino-acid sequence, 496 residues long: Chromosomal replication initiator protein DnaA (496 aa).

Residues 1–76 (MKMDSAVSEE…TELWQEENPQ (76 aa)) are domain I, interacts with DnaA modulators. The segment at 76–150 (QILKVEVVVR…AAATDAVLGS (75 aa)) is domain II. The domain III, AAA+ region stretch occupies residues 151–373 (PLDPRYTFDT…GAFNQLLFRQ (223 aa)). ATP-binding residues include Gly-197, Gly-199, Lys-200, and Thr-201. A domain IV, binds dsDNA region spans residues 374-496 (SFEPNISIDR…LKRLINDQAA (123 aa)).

It belongs to the DnaA family. As to quaternary structure, oligomerizes as a right-handed, spiral filament on DNA at oriC.

Its subcellular location is the cytoplasm. Functionally, plays an essential role in the initiation and regulation of chromosomal replication. ATP-DnaA binds to the origin of replication (oriC) to initiate formation of the DNA replication initiation complex once per cell cycle. Binds the DnaA box (a 9 base pair repeat at the origin) and separates the double-stranded (ds)DNA. Forms a right-handed helical filament on oriC DNA; dsDNA binds to the exterior of the filament while single-stranded (ss)DNA is stabiized in the filament's interior. The ATP-DnaA-oriC complex binds and stabilizes one strand of the AT-rich DNA unwinding element (DUE), permitting loading of DNA polymerase. After initiation quickly degrades to an ADP-DnaA complex that is not apt for DNA replication. Binds acidic phospholipids. This is Chromosomal replication initiator protein DnaA from Brucella suis biovar 1 (strain 1330).